Reading from the N-terminus, the 55-residue chain is Large ribosomal subunit protein uL15 (55 aa).

It belongs to the universal ribosomal protein uL15 family. As to quaternary structure, part of the 50S ribosomal subunit.

Functionally, binds to the 23S rRNA. The sequence is that of Large ribosomal subunit protein uL15 (rplO) from Lactococcus lactis subsp. cremoris (Streptococcus cremoris).